We begin with the raw amino-acid sequence, 142 residues long: Small ribosomal subunit protein uS12 (142 aa).

Residues 1-44 (MANGKYAARKLKKDRQKHRWSDTDYARRERGLGKKSDPLEGAPQ) are disordered. Basic residues predominate over residues 7-18 (AARKLKKDRQKH). Basic and acidic residues predominate over residues 19–38 (RWSDTDYARRERGLGKKSDP).

The protein belongs to the universal ribosomal protein uS12 family. In terms of assembly, part of the 30S ribosomal subunit.

Its function is as follows. With S4 and S5 plays an important role in translational accuracy. Located at the interface of the 30S and 50S subunits. The chain is Small ribosomal subunit protein uS12 from Haloarcula marismortui (strain ATCC 43049 / DSM 3752 / JCM 8966 / VKM B-1809) (Halobacterium marismortui).